Consider the following 283-residue polypeptide: Bifunctional protein FolD (283 aa).

Residues 164 to 166 (GRS), Ser189, and Ile230 contribute to the NADP(+) site.

It belongs to the tetrahydrofolate dehydrogenase/cyclohydrolase family. Homodimer.

It catalyses the reaction (6R)-5,10-methylene-5,6,7,8-tetrahydrofolate + NADP(+) = (6R)-5,10-methenyltetrahydrofolate + NADPH. The catalysed reaction is (6R)-5,10-methenyltetrahydrofolate + H2O = (6R)-10-formyltetrahydrofolate + H(+). The protein operates within one-carbon metabolism; tetrahydrofolate interconversion. Functionally, catalyzes the oxidation of 5,10-methylenetetrahydrofolate to 5,10-methenyltetrahydrofolate and then the hydrolysis of 5,10-methenyltetrahydrofolate to 10-formyltetrahydrofolate. This Lacticaseibacillus casei (strain BL23) (Lactobacillus casei) protein is Bifunctional protein FolD.